A 1129-amino-acid polypeptide reads, in one-letter code: Protein LANA1 (1129 aa).

Disordered stretches follow at residues 1–988 (MAPP…PVPY) and 1110–1129 (LPLTQPGENQGPGDSPQEMT). Composition is skewed to basic and acidic residues over residues 28–41 (RSPERCDLGDDLHL) and 48–58 (VADSVDGRECG). Pro residues predominate over residues 85-104 (PVAPIPSPAPATPLPPPALL). Residues 139 to 156 (SPESSQRPPLSSPTGRPD) are compositionally biased toward polar residues. Residues 161-185 (MRPPPSQQTTPPHSPTTPPPEPPSK) show a composition bias toward pro residues. Over residues 186–197 (SSPDSLAPSTLR) the composition is skewed to low complexity. The segment covering 207 to 217 (PQGPSTLNPIC) has biased composition (polar residues). The span at 263-275 (PISIGSSSPSEGS) shows a compositional bias: low complexity. Basic and acidic residues-rich tracts occupy residues 292–301 (EASKNEKECS) and 314–323 (EISKESQVDK). Positions 324-419 (DDNDNKDDEE…DKKEDEEDGG (96 aa)) are enriched in acidic residues. Residues 431-471 (QQQQEPQQQEPQQQEPQQQEPQQQEPQQQEPQQQEPQQQEP) show a composition bias toward low complexity. Positions 472 to 528 (QQREPQQREPQQREPQQREPQQREPQQREPQQREPQQREPQQREPQQREPQQREPQQ) are enriched in basic and acidic residues. A compositionally biased stretch (low complexity) spans 529 to 596 (REPQQQEPQQ…QQQEPQQQDE (68 aa)). Residues 597–888 (QQQDEQQQDE…QELEEVEEQE (292 aa)) show a composition bias toward acidic residues. The segment covering 924–934 (THEQIASSPPG) has biased composition (polar residues). Positions 962-979 (PGVRMRRVPVTHPKKPHP) are enriched in basic residues. Residues 1008-1129 (FLGKDGRRDP…GPGDSPQEMT (122 aa)) are DNA-binding domain.

In terms of assembly, homooligomer. Interacts with host BRD2. Interacts with host RELA, ELOB, ELOC and CUL5; these interactions induce the proteasomal degradation of host RELA. Interacts with host TRIM28 and NFE2L2/NRF2; these interactions are essential for the shutdown of lytic gene expression during the early stage of infection. Interacts (via N-terminus) with host histones H2A and H2B; these interactions are essential to dock LANA1 onto chromosomes. Interacts with host BUB1 and PCNA. Interacts with host NAP1L1; this interaction is required for LANA1-dependent DNA replication. Interacts with components of the host MLL1 complex KMT2A and WDR5.

Its subcellular location is the host nucleus. Multifunctional protein that plays a role in the replication and long-term persistence of the viral episomal genome in dividing cells. Binds to mitotic chromosomes via its N-terminal region and to a 16-bp imperfect palindrome within the origin of replication (oriP) located in the viral terminal repeat (TR) through its C-terminal. Tethers viral episomes to chromosomes during mitosis. Plays a critical role in the shutdown of lytic gene expression during the early stage of infection by interacting with host TRIM28. Also plays a role in the repression of host NF-kappa-B activity upon TNF-alpha stimulation by promoting the proteasomal degradation of host RELA. Promotes nuclear localization and cleavage of host STAT6 leading to constitutive activation of the IL13/STAT6 signaling pathway to promote viral latency. Interacts with and modulates the histone methyltransferase MLL1 complex activity, leading to its recruitment on viral DNA terminal repeats changing the dynamic of histone H3 methylated 'Lys-4'(H3K4me) profile during the initial hours following infection. The chain is Protein LANA1 (LANA1) from Homo sapiens (Human).